We begin with the raw amino-acid sequence, 443 residues long: MEYDDKLVRFRQGHLNPFDKQGGAERHPADSEAQPPKDSSTISPHSIPEYHCPDRVMDLGVSEDHFSRPVGLFLASDIQQLRQAIEECKQEILELPENSDRQKDAVVRLIHLRLKLQELNDPLEDEPNLRILLEHRFYKEKSKSVKHVCDKCSTFIWGLIQTWYTCTGCSYSCHSKCLNLITKPCVRSKVSHQAEYELSICPEAGLDSQDYRCAECRTPISLRAVPSEARQCDYTGQYYCISCHWNDLAVIPARAIHNWDFEPRKVSRCSMRYLALMLGRPVLKLREINPLLFNYVEELVEIRKLRQDILLMKPYFITCKEAMEARLLLQLQDRQHFVENDDMYSLQDLLDISSGRLGCTLTEIHTTFAKHIKLDCERCQAKGFVCELCKEGDILFPFDSHTSVCQDCAAVFHRDCYYDNSTSCPRCMRLSLRKQTQNPEAEP.

The tract at residues 1–49 (MEYDDKLVRFRQGHLNPFDKQGGAERHPADSEAQPPKDSSTISPHSIPE) is disordered. 2 Phorbol-ester/DAG-type zinc fingers span residues 134 to 185 (EHRF…TKPC) and 364 to 424 (IHTT…STSC).

The protein belongs to the DEF8 family.

Its function is as follows. Positively regulates lysosome peripheral distribution and ruffled border formation in osteoclasts. Involved in bone resorption. This chain is Differentially expressed in FDCP 8 homolog A (def8-a), found in Xenopus laevis (African clawed frog).